The chain runs to 385 residues: uncharacterized protein (385 aa).

The protein belongs to the peptidase M20 family.

This is an uncharacterized protein from Staphylococcus saprophyticus subsp. saprophyticus (strain ATCC 15305 / DSM 20229 / NCIMB 8711 / NCTC 7292 / S-41).